A 100-amino-acid polypeptide reads, in one-letter code: Large ribosomal subunit protein uL23 (100 aa).

The protein belongs to the universal ribosomal protein uL23 family. In terms of assembly, part of the 50S ribosomal subunit. Contacts protein L29, and trigger factor when it is bound to the ribosome.

Its function is as follows. One of the early assembly proteins it binds 23S rRNA. One of the proteins that surrounds the polypeptide exit tunnel on the outside of the ribosome. Forms the main docking site for trigger factor binding to the ribosome. In Vibrio vulnificus (strain CMCP6), this protein is Large ribosomal subunit protein uL23.